Consider the following 274-residue polypeptide: 4-diphosphocytidyl-2-C-methyl-D-erythritol kinase (274 aa).

Residue Lys-9 is part of the active site. Residue 91-101 participates in ATP binding; the sequence is PAGAGLGGGSS. Asp-133 is an active-site residue.

The protein belongs to the GHMP kinase family. IspE subfamily.

The enzyme catalyses 4-CDP-2-C-methyl-D-erythritol + ATP = 4-CDP-2-C-methyl-D-erythritol 2-phosphate + ADP + H(+). The protein operates within isoprenoid biosynthesis; isopentenyl diphosphate biosynthesis via DXP pathway; isopentenyl diphosphate from 1-deoxy-D-xylulose 5-phosphate: step 3/6. In terms of biological role, catalyzes the phosphorylation of the position 2 hydroxy group of 4-diphosphocytidyl-2C-methyl-D-erythritol. The polypeptide is 4-diphosphocytidyl-2-C-methyl-D-erythritol kinase (Persephonella marina (strain DSM 14350 / EX-H1)).